The sequence spans 576 residues: Type II restriction enzyme BsuRI (576 aa).

As to quaternary structure, monomer. The cofactor is Mg(2+).

It carries out the reaction Endonucleolytic cleavage of DNA to give specific double-stranded fragments with terminal 5'-phosphates.. A P subtype restriction enzyme that recognizes the double-stranded sequence 5'-GGCC-3' and cleaves after G-2. This Bacillus subtilis protein is Type II restriction enzyme BsuRI (hsdRR).